The chain runs to 254 residues: Proteasome activator complex subunit 3 (254 aa).

At Ala2 the chain carries N-acetylalanine. 2 positions are modified to phosphoserine: Ser17 and Ser24. The residue at position 195 (Lys195) is an N6-acetyllysine; by P300/CBP. Ser247 is subject to Phosphoserine; by CHEK2.

The protein belongs to the PA28 family. In terms of assembly, homoheptamer; the stability of the heptamer is essential for the specific activation of the trypsine-like subunit and inhibition of the chymotrypsin-like and postglutamyl-preferring (PGPH) subunits of the proteasome. Interacts with p53/TP53, MDM2 and MAP3K3. Associates with the proteasome. Interacts with CCAR2. Interacts with PSME3IP1 (via C-terminus); the interaction is direct and promotes the association of PSME3 with the 20S proteasome. Interacts with COIL; the interaction is inhibited by PSME3IP1. Post-translationally, phosphorylated by MAP3K3. Phosphorylation at Ser-247 promotes its association with CCAR2. In terms of processing, acetylation at the major site Lys-195 is important for oligomerization and ability to degrade its target substrates. Deacetylated by SIRT1.

It localises to the nucleus. The protein localises to the cytoplasm. Its function is as follows. Subunit of the 11S REG-gamma (also called PA28-gamma) proteasome regulator, a doughnut-shaped homoheptamer which associates with the proteasome. 11S REG-gamma activates the trypsin-like catalytic subunit of the proteasome but inhibits the chymotrypsin-like and postglutamyl-preferring (PGPH) subunits. Facilitates the MDM2-p53/TP53 interaction which promotes ubiquitination- and MDM2-dependent proteasomal degradation of p53/TP53, limiting its accumulation and resulting in inhibited apoptosis after DNA damage. May also be involved in cell cycle regulation. Mediates CCAR2 and CHEK2-dependent SIRT1 inhibition. This Pongo abelii (Sumatran orangutan) protein is Proteasome activator complex subunit 3 (PSME3).